The primary structure comprises 209 residues: Ribosome maturation factor RimP (209 aa).

It belongs to the RimP family.

It is found in the cytoplasm. Its function is as follows. Required for maturation of 30S ribosomal subunits. This Bartonella bacilliformis (strain ATCC 35685 / KC583 / Herrer 020/F12,63) protein is Ribosome maturation factor RimP.